The sequence spans 169 residues: Putative pre-16S rRNA nuclease (169 aa).

Residues 1 to 19 (MTDSDHRLPDRPGEGDPGR) show a composition bias toward basic and acidic residues. Residues 1–24 (MTDSDHRLPDRPGEGDPGRGRRIG) form a disordered region.

This sequence belongs to the YqgF nuclease family.

It is found in the cytoplasm. Could be a nuclease involved in processing of the 5'-end of pre-16S rRNA. The polypeptide is Putative pre-16S rRNA nuclease (Mycobacterium sp. (strain KMS)).